Consider the following 390-residue polypeptide: Digeranylgeranylglycerophospholipid reductase (390 aa).

The FAD site is built by Ala-18, Glu-37, Cys-48, Ala-49, Ala-51, Arg-98, Val-122, Asp-278, Gly-290, and Ile-291. Val-368 lines the a 2,3-bis-O-(geranylgeranyl)-sn-glycerol 1-phospholipid pocket.

This sequence belongs to the geranylgeranyl reductase family. DGGGPL reductase subfamily. FAD serves as cofactor.

It carries out the reaction a 2,3-bis-O-phytanyl-sn-glycerol 1-phospholipid + 8 A = a 2,3-bis-O-(geranylgeranyl)-sn-glycerol 1-phospholipid + 8 AH2. The catalysed reaction is 2,3-bis-O-(phytanyl)-sn-glycerol 1-phosphate + 8 A = 2,3-bis-O-(geranylgeranyl)-sn-glycerol 1-phosphate + 8 AH2. It catalyses the reaction CDP-2,3-bis-O-(geranylgeranyl)-sn-glycerol + 8 AH2 = CDP-2,3-bis-O-(phytanyl)-sn-glycerol + 8 A. The enzyme catalyses archaetidylserine + 8 AH2 = 2,3-bis-O-phytanyl-sn-glycero-3-phospho-L-serine + 8 A. Its pathway is membrane lipid metabolism; glycerophospholipid metabolism. In terms of biological role, is involved in the reduction of 2,3-digeranylgeranylglycerophospholipids (unsaturated archaeols) into 2,3-diphytanylglycerophospholipids (saturated archaeols) in the biosynthesis of archaeal membrane lipids. Catalyzes the formation of archaetidic acid (2,3-di-O-phytanyl-sn-glyceryl phosphate) from 2,3-di-O-geranylgeranylglyceryl phosphate (DGGGP) via the hydrogenation of each double bond of the isoprenoid chains. Is also probably able to reduce double bonds of geranyl groups in CDP-2,3-bis-O-(geranylgeranyl)-sn-glycerol and archaetidylserine, thus acting at various stages in the biosynthesis of archaeal membrane lipids. The polypeptide is Digeranylgeranylglycerophospholipid reductase (Methanococcus vannielii (strain ATCC 35089 / DSM 1224 / JCM 13029 / OCM 148 / SB)).